We begin with the raw amino-acid sequence, 260 residues long: Methyl-coenzyme M reductase subunit gamma (260 aa).

R123 lines the coenzyme M pocket.

The protein belongs to the methyl-coenzyme M reductase gamma subunit family. As to quaternary structure, MCR is a hexamer of two alpha, two beta, and two gamma chains, forming a dimer of heterotrimers. It depends on coenzyme F430 as a cofactor.

The protein localises to the cytoplasm. The catalysed reaction is coenzyme B + methyl-coenzyme M = methane + coenzyme M-coenzyme B heterodisulfide. Its pathway is one-carbon metabolism; methyl-coenzyme M reduction; methane from methyl-coenzyme M: step 1/1. In terms of biological role, component of the methyl-coenzyme M reductase (MCR) I that catalyzes the reductive cleavage of methyl-coenzyme M (CoM-S-CH3 or 2-(methylthio)ethanesulfonate) using coenzyme B (CoB or 7-mercaptoheptanoylthreonine phosphate) as reductant which results in the production of methane and the mixed heterodisulfide of CoB and CoM (CoM-S-S-CoB). This is the final step in methanogenesis. The protein is Methyl-coenzyme M reductase subunit gamma (mcrG) of Methanococcus vannielii.